A 299-amino-acid chain; its full sequence is Ribosomal RNA small subunit methyltransferase H (299 aa).

S-adenosyl-L-methionine-binding positions include 45 to 47, D64, F92, D108, and Q115; that span reads GGH. The disordered stretch occupies residues 275–299; sequence PQSDEQAKNPRSRSAKLRLAQRKEQ. Residues 284-299 show a composition bias toward basic residues; the sequence is PRSRSAKLRLAQRKEQ.

This sequence belongs to the methyltransferase superfamily. RsmH family.

It is found in the cytoplasm. It carries out the reaction cytidine(1402) in 16S rRNA + S-adenosyl-L-methionine = N(4)-methylcytidine(1402) in 16S rRNA + S-adenosyl-L-homocysteine + H(+). Functionally, specifically methylates the N4 position of cytidine in position 1402 (C1402) of 16S rRNA. The polypeptide is Ribosomal RNA small subunit methyltransferase H (Gloeothece citriformis (strain PCC 7424) (Cyanothece sp. (strain PCC 7424))).